Here is a 517-residue protein sequence, read N- to C-terminus: Protein disulfide-isomerase EUG1 (517 aa).

The signal sequence occupies residues 1–29 (MQVTTRFISAIVSFCLFASFTLAENSARA). Residues 30–141 (TPGSDLLVLT…ITQYMIQLYE (112 aa)) enclose the Thioredoxin 1 domain. Residues Asn159, Asn174, Asn207, Asn293, and Asn462 are each glycosylated (N-linked (GlcNAc...) asparagine). Residues 355 to 487 (YREGTAKPIV…VFEFIKESGT (133 aa)) form the Thioredoxin 2 domain. Residues 514–517 (HDEL) carry the Prevents secretion from ER motif.

The protein belongs to the protein disulfide isomerase family. Interacts with EPS1. May have O-linked mannose residues.

It localises to the endoplasmic reticulum lumen. The catalysed reaction is Catalyzes the rearrangement of -S-S- bonds in proteins.. Probably interacts with nascent polypeptides in the endoplasmic reticulum. It is an essential gene only in the absence of PDI. Its native disulfide isomerase activity is very low. In Saccharomyces cerevisiae (strain ATCC 204508 / S288c) (Baker's yeast), this protein is Protein disulfide-isomerase EUG1 (EUG1).